The sequence spans 132 residues: Glycine-rich protein 3 (132 aa).

Residues 1–20 (MRYAVLLAVVLLLGAFTAEA) form the signal peptide.

Prismatic layer of shell (at protein level). Expressed primarily in the mantle with highest level in the mantle edge and lower level in the mantle pallium.

It is found in the secreted. The sequence is that of Glycine-rich protein 3 from Pinctada maxima (Silver-lipped pearl oyster).